Here is a 120-residue protein sequence, read N- to C-terminus: NADH-ubiquinone oxidoreductase chain 3 (120 aa).

3 helical membrane passes run 8-28, 63-83, and 90-110; these read YFIL…ISLL, FYLV…LFPW, and ISYF…IGFI.

The protein belongs to the complex I subunit 3 family.

It localises to the mitochondrion membrane. The enzyme catalyses a ubiquinone + NADH + 5 H(+)(in) = a ubiquinol + NAD(+) + 4 H(+)(out). Its function is as follows. Core subunit of the mitochondrial membrane respiratory chain NADH dehydrogenase (Complex I) that is believed to belong to the minimal assembly required for catalysis. Complex I functions in the transfer of electrons from NADH to the respiratory chain. The immediate electron acceptor for the enzyme is believed to be ubiquinone. The protein is NADH-ubiquinone oxidoreductase chain 3 (ND3) of Cyanidium caldarium (Red alga).